Consider the following 470-residue polypeptide: Neuraminidase (470 aa).

At 1–14 (MNPNQKIITIGSIS) the chain is on the intravirion side. Positions 11–32 (GSISLGLVVFNVLLHVVSIIVT) are involved in apical transport and lipid raft association. A helical membrane pass occupies residues 15–35 (LGLVVFNVLLHVVSIIVTVLV). Residues 32–86 (TVLVLGKGGNNGICNETVVREYNETVRIEKVTQWHNTNVVEYVPYWNGGTYMNNT) form a hypervariable stalk region region. Topologically, residues 36–470 (LGKGGNNGIC…AILPFDIDKM (435 aa)) are virion surface. N-linked (GlcNAc...) asparagine; by host glycosylation is found at asparagine 46, asparagine 54, and asparagine 84. Positions 89–470 (ICDAKGFAPF…AILPFDIDKM (382 aa)) are head of neuraminidase. Intrachain disulfides connect cysteine 90–cysteine 417, cysteine 122–cysteine 127, cysteine 182–cysteine 229, cysteine 231–cysteine 236, cysteine 277–cysteine 290, cysteine 279–cysteine 288, cysteine 316–cysteine 335, and cysteine 421–cysteine 446. Arginine 116 contributes to the substrate binding site. N-linked (GlcNAc...) asparagine; by host glycosylation is present at asparagine 144. Residue aspartate 149 is the Proton donor/acceptor of the active site. Arginine 150 lines the substrate pocket. Residue 275–276 (EE) participates in substrate binding. Arginine 291 is a binding site for substrate. Residues aspartate 292, glycine 296, and aspartate 322 each coordinate Ca(2+). Residue arginine 368 coordinates substrate. Asparagine 398 is a glycosylation site (N-linked (GlcNAc...) asparagine; by host). The Nucleophile role is filled by tyrosine 402.

This sequence belongs to the glycosyl hydrolase 34 family. As to quaternary structure, homotetramer. Ca(2+) serves as cofactor. Post-translationally, N-glycosylated.

The protein localises to the virion membrane. It localises to the host apical cell membrane. It carries out the reaction Hydrolysis of alpha-(2-&gt;3)-, alpha-(2-&gt;6)-, alpha-(2-&gt;8)- glycosidic linkages of terminal sialic acid residues in oligosaccharides, glycoproteins, glycolipids, colominic acid and synthetic substrates.. Inhibited by the neuraminidase inhibitors zanamivir (Relenza) and oseltamivir (Tamiflu). These drugs interfere with the release of progeny virus from infected cells and are effective against all influenza strains. Resistance to neuraminidase inhibitors is quite rare. In terms of biological role, catalyzes the removal of terminal sialic acid residues from viral and cellular glycoconjugates. Cleaves off the terminal sialic acids on the glycosylated HA during virus budding to facilitate virus release. Additionally helps virus spread through the circulation by further removing sialic acids from the cell surface. These cleavages prevent self-aggregation and ensure the efficient spread of the progeny virus from cell to cell. Otherwise, infection would be limited to one round of replication. Described as a receptor-destroying enzyme because it cleaves a terminal sialic acid from the cellular receptors. May facilitate viral invasion of the upper airways by cleaving the sialic acid moieties on the mucin of the airway epithelial cells. Likely to plays a role in the budding process through its association with lipid rafts during intracellular transport. May additionally display a raft-association independent effect on budding. Plays a role in the determination of host range restriction on replication and virulence. Sialidase activity in late endosome/lysosome traffic seems to enhance virus replication. The polypeptide is Neuraminidase (Influenza A virus (strain A/Duck/Ukraine/1/1963 H3N8)).